Here is a 258-residue protein sequence, read N- to C-terminus: MARKSFGQHFLLDLNVTRKIARLAQVGEGDTVVEVGPGPGGLTRALLETGARVVAIEKDSRFLPLLAEVAEVAEGRLELVEGDALKVDAAQAAGGPAHVVSNLPYNVGTQLLINWLTGPFRPLSMTLMFQKEVADRIVAQPGDDAYGRLAVIAQTLCEARTVMDLPAKAFTPPPKVASAVVRLVPKAEPPPAEVVAALERVTAAAFGQRRKMLRSSLKALGGADLCERAGVSPDARAEVIDLAGFLDLARATLGGADQ.

S-adenosyl-L-methionine-binding residues include histidine 9, leucine 11, glycine 36, glutamate 57, aspartate 83, and asparagine 102.

Belongs to the class I-like SAM-binding methyltransferase superfamily. rRNA adenine N(6)-methyltransferase family. RsmA subfamily.

It localises to the cytoplasm. It carries out the reaction adenosine(1518)/adenosine(1519) in 16S rRNA + 4 S-adenosyl-L-methionine = N(6)-dimethyladenosine(1518)/N(6)-dimethyladenosine(1519) in 16S rRNA + 4 S-adenosyl-L-homocysteine + 4 H(+). Its function is as follows. Specifically dimethylates two adjacent adenosines (A1518 and A1519) in the loop of a conserved hairpin near the 3'-end of 16S rRNA in the 30S particle. May play a critical role in biogenesis of 30S subunits. In Caulobacter vibrioides (strain ATCC 19089 / CIP 103742 / CB 15) (Caulobacter crescentus), this protein is Ribosomal RNA small subunit methyltransferase A.